Here is a 203-residue protein sequence, read N- to C-terminus: Probable nicotinate-nucleotide adenylyltransferase (203 aa).

Belongs to the NadD family.

It catalyses the reaction nicotinate beta-D-ribonucleotide + ATP + H(+) = deamido-NAD(+) + diphosphate. Its pathway is cofactor biosynthesis; NAD(+) biosynthesis; deamido-NAD(+) from nicotinate D-ribonucleotide: step 1/1. Functionally, catalyzes the reversible adenylation of nicotinate mononucleotide (NaMN) to nicotinic acid adenine dinucleotide (NaAD). This Dictyoglomus turgidum (strain DSM 6724 / Z-1310) protein is Probable nicotinate-nucleotide adenylyltransferase.